Here is a 423-residue protein sequence, read N- to C-terminus: Zinc finger protein Gfi-1 (423 aa).

An SNAG domain region spans residues 1–20; that stretch reads MPRSFLVKSKKAHSYHQPRS. The segment at 1 to 102 is disordered; the sequence is MPRSFLVKSK…PPSPSVSPAS (102 aa). 2 positions are modified to phosphoserine: Ser-20 and Ser-57. Residues 48–57 show a composition bias toward basic and acidic residues; the sequence is SKMEPRERLS. Positions 141-258 are required for interaction with RELA; the sequence is RQCSALERSA…LLLGGGSYKC (118 aa). C2H2-type zinc fingers lie at residues 256–279, 285–307, 313–335, 341–363, 369–391, and 397–420; these read YKCI…RRSH, FACE…KAVH, FDCK…LLIH, YPCQ…TFIH, HKCQ…SRKH, and FGCD…ETQH.

As to quaternary structure, interacts with U2AF1L4. Component of RCOR-GFI-KDM1A-HDAC complexes. Interacts directly with RCOR1, KDM1A and HDAC2. Also interacts with HDAC1. regions. Interacts (via the zinc-finger domain) with ARIH2; the interaction prevents GFI1 ubiquitination and proteasomal degradation. Interacts with PIAS3; the interaction relieves the inhibitory effect of PIAS3 on STAT3-mediated transcriptional activity. Forms a complex with EHMT2 and HDAC1 to promote 'Lys-9' dimethylation of H3 (H3K9Me2) and repress expression of target genes. Interacts directly with EHMT2. Component of the GFI1-AJUBA-HDAC1 repressor complex. Interacts directly with AJUBA (via ITS LIM domains); the interaction results in the HDAC-dependent corepression of a subset of GFI1 target genes and, occurs independent of the SNAG domain. Interacts with SPI1; the interaction inhibits SPI1 transcriptional activity targeted at macrophage-specific genes, repressing macrophage differentiation of myeloid progenitor cells and promoting granulocyte commitment. Interacts with RUNX1T1; the interaction represses HDAC-mediated transcriptional activity. Interacts with RELA; the interaction occurs on liposaccharide (LPS) stimulation controls RELA DNA binding activity and regulates endotoxin-mediated TOLL-like receptor inflammatory response. Interacts (via the C-terminal zinc fingers) with ZBTB17; the interaction results in the recruitment of GFI1 to the CDKN1A/p21 promoter and repression of CDKN1A/p21 transcription. Ubiquitinated. As to expression, restricted to lymphoid tissues and testes in adult animals.

The protein resides in the nucleus. Transcription repressor essential for hematopoiesis. Functions in a cell-context and development-specific manner. Binds to 5'-TAAATCAC[AT]GCA-3' in the promoter region of a large number of genes. Component of several complexes, including the EHMT2-GFI1-HDAC1, AJUBA-GFI1-HDAC1 and RCOR-GFI-KDM1A-HDAC complexes, that suppress, via histone deacetylase (HDAC) recruitment, a number of genes implicated in multilineage blood cell development. Regulates neutrophil differentiation, promotes proliferation of lymphoid cells, and is required for granulocyte development. Inhibits SPI1 transcriptional activity at macrophage-specific genes, repressing macrophage differentiation of myeloid progenitor cells and promoting granulocyte commitment. Mediates, together with U2AF1L4, the alternative splicing of CD45 and controls T-cell receptor signaling. Regulates the endotoxin-mediated Toll-like receptor (TLR) inflammatory response by antagonizing RELA. Cooperates with CBFA2T2 to regulate ITGB1-dependent neurite growth. Controls cell-cycle progression by repressing CDKNIA/p21 transcription in response to TGFB1 via recruitment of GFI1 by ZBTB17 to the CDKNIA/p21 and CDKNIB promoters. Required for the maintenance of inner ear hair cells. In addition to its role in transcription, acts as a substrate adapter for PRMT1 in the DNA damage response: facilitates the recognition of TP53BP1 and MRE11 substrates by PRMT1, promoting their methylation and the DNA damage response. This chain is Zinc finger protein Gfi-1 (Gfi1), found in Rattus norvegicus (Rat).